The following is a 126-amino-acid chain: Fluoride-specific ion channel FluC 3 (126 aa).

4 consecutive transmembrane segments (helical) span residues 7 to 27 (MWVG…GLSI), 37 to 57 (LGTF…SILF), 68 to 87 (LMNT…FSSM), and 101 to 121 (AIAA…AAFG). Positions 79 and 82 each coordinate Na(+).

Belongs to the fluoride channel Fluc/FEX (TC 1.A.43) family.

The protein resides in the cell inner membrane. The catalysed reaction is fluoride(in) = fluoride(out). Na(+) is not transported, but it plays an essential structural role and its presence is essential for fluoride channel function. Functionally, fluoride-specific ion channel. Important for reducing fluoride concentration in the cell, thus reducing its toxicity. The protein is Fluoride-specific ion channel FluC 3 of Yersinia pestis.